The primary structure comprises 145 residues: U1 small nuclear ribonucleoprotein C (145 aa).

The Matrin-type zinc finger occupies 4–36 (YYCDYCDTYLTHDSPSVRKTHCTGRKHRDNVKF). Residues 67–91 (FAGGPGGAPPKPAGVSIPPPNMGAP) are disordered. Positions 73 to 91 (GAPPKPAGVSIPPPNMGAP) are enriched in pro residues.

Belongs to the U1 small nuclear ribonucleoprotein C family. U1 snRNP is composed of the 7 core Sm proteins B/B', D1, D2, D3, E, F and G that assemble in a heptameric protein ring on the Sm site of the small nuclear RNA to form the core snRNP, and at least 3 U1 snRNP-specific proteins U1-70K, U1-A and U1-C. U1-C interacts with U1 snRNA and the 5' splice-site region of the pre-mRNA.

The protein resides in the nucleus. Functionally, component of the spliceosomal U1 snRNP, which is essential for recognition of the pre-mRNA 5' splice-site and the subsequent assembly of the spliceosome. U1-C is directly involved in initial 5' splice-site recognition for both constitutive and regulated alternative splicing. The interaction with the 5' splice-site seems to precede base-pairing between the pre-mRNA and the U1 snRNA. Stimulates commitment or early (E) complex formation by stabilizing the base pairing of the 5' end of the U1 snRNA and the 5' splice-site region. Regulates alternative splicing of a distinct group of target genes. The sequence is that of U1 small nuclear ribonucleoprotein C from Drosophila melanogaster (Fruit fly).